The chain runs to 287 residues: Large ribosomal subunit protein uL2 (287 aa).

A disordered region spans residues 221–287; the sequence is RGSVMNPCDH…SKRSRGGRDS (67 aa). Positions 258 to 287 are enriched in basic residues; sequence KTRKRNKPSNRFVLRKRRRVSKRSRGGRDS.

It belongs to the universal ribosomal protein uL2 family. In terms of assembly, part of the 50S ribosomal subunit. Forms a bridge to the 30S subunit in the 70S ribosome.

One of the primary rRNA binding proteins. Required for association of the 30S and 50S subunits to form the 70S ribosome, for tRNA binding and peptide bond formation. It has been suggested to have peptidyltransferase activity; this is somewhat controversial. Makes several contacts with the 16S rRNA in the 70S ribosome. This chain is Large ribosomal subunit protein uL2, found in Prochlorococcus marinus (strain MIT 9211).